The following is a 663-amino-acid chain: Cyclic nucleotide-gated channel alpha-2 (663 aa).

A disordered region spans residues 1-61 (MTEKANGVKS…QLAEMDAPQQ (61 aa)). At 1 to 144 (MTEKANGVKS…PAGDWYYRWL (144 aa)) the chain is on the cytoplasmic side. Residues 12–23 (PANNHNHHAPPA) are compositionally biased toward low complexity. Residues 145–166 (FLIALPVLYNWCLLVARACFSD) form a helical membrane-spanning segment. Residues 167 to 176 (LQKGYYIVWL) lie on the Extracellular side of the membrane. Residues 177–197 (VLDYVSDVVYIADLFIRLRTG) form a helical membrane-spanning segment. The Cytoplasmic segment spans residues 198-222 (FLEQGLLVKDTKKLRDNYIHTMQFK). Residues 223-241 (LDVASIIPTDLIYFAVGIH) form a helical membrane-spanning segment. The Extracellular segment spans residues 242-246 (NPEVR). Residues 247–265 (FNRLLHFARMFEFFDRTET) traverse the membrane as a helical segment. Topologically, residues 266-272 (RTSYPNI) are cytoplasmic. The ion conduction pathway stretch occupies residues 270 to 378 (PNIFRISNLI…GNVGSMISNM (109 aa)). The chain crosses the membrane as a helical span at residues 273–296 (FRISNLILYILIIIHWNACIYYAI). At 297-319 (SKSIGFGVDTWVYPNITDPEYGY) the chain is on the extracellular side. 2 helical membrane-spanning segments follow: residues 320-354 (LSRE…LFVI) and 355-379 (FDFL…SNMN). The selectivity filter stretch occupies residues 337–340 (TIGE). Residues 380–456 (ATRAEFQAKI…STLKKVRIFQ (77 aa)) form a C-linker region. Residues 380–663 (ATRAEFQAKI…NSPEPPAEKP (284 aa)) are Cytoplasmic-facing. The tract at residues 460–580 (AGLLVELVLK…EERGREILMK (121 aa)) is cyclic nucleotide-binding domain. Positions 520, 523, 536, and 537 each coordinate 3',5'-cyclic GMP. Residues arginine 536 and threonine 537 each coordinate 3',5'-cyclic AMP. Residues 597–651 (VQEKLEQLETNMDTLYTRFARLLAEYTGAQQKLKQRITVLETKMKQNNEDDSLSD) are a coiled coil. Residues 640–663 (MKQNNEDDSLSDGMNSPEPPAEKP) are disordered.

Belongs to the cyclic nucleotide-gated cation channel (TC 1.A.1.5) family. CNGA2 subfamily. As to quaternary structure, the olfactory cyclic nucleotide-gated channel is an heterotetramer composed of CNGA2, CNGA4 and CNGB1b subunits with 2:1:1 stoichiometry. Olfactory neurons.

Its subcellular location is the cell projection. The protein localises to the cilium membrane. It carries out the reaction Ca(2+)(in) = Ca(2+)(out). The catalysed reaction is Na(+)(in) = Na(+)(out). The enzyme catalyses K(+)(in) = K(+)(out). It catalyses the reaction NH4(+)(in) = NH4(+)(out). It carries out the reaction Rb(+)(in) = Rb(+)(out). The catalysed reaction is Li(+)(in) = Li(+)(out). The enzyme catalyses Cs(+)(in) = Cs(+)(out). Its function is as follows. Pore-forming subunit of the olfactory cyclic nucleotide-gated channel. Operates in the cilia of olfactory sensory neurons where chemical stimulation of the odorant is converted to an electrical signal. Mediates odorant-induced cAMP-dependent Ca(2+) influx triggering neuron depolarization. The rise of intracellular Ca(2+) levels potentiates the olfactory response by activating Ca(2+)-dependent Cl(-) channels, but it also serves as a negative feedback signal to desensitize the channel for rapid adaptation to odorants. Conducts cAMP- and cGMP-gated ion currents, with permeability for monovalent and divalent cations. This chain is Cyclic nucleotide-gated channel alpha-2, found in Bos taurus (Bovine).